Consider the following 396-residue polypeptide: Elongation factor Tu 1 (396 aa).

The 197-residue stretch at 10–206 folds into the tr-type G domain; sequence KPHVNVGTIG…ALDTYIPTPK (197 aa). The G1 stretch occupies residues 19–26; that stretch reads GHVDHGKT. Residue 19–26 participates in GTP binding; that stretch reads GHVDHGKT. Thr-26 is a Mg(2+) binding site. The G2 stretch occupies residues 60–64; the sequence is GITIS. The G3 stretch occupies residues 81 to 84; the sequence is DCPG. Residues 81-85 and 136-139 each bind GTP; these read DCPGH and NKAD. Residues 136 to 139 are G4; sequence NKAD. Residues 174–176 are G5; the sequence is SAL.

The protein belongs to the TRAFAC class translation factor GTPase superfamily. Classic translation factor GTPase family. EF-Tu/EF-1A subfamily. As to quaternary structure, monomer.

Its subcellular location is the cytoplasm. The catalysed reaction is GTP + H2O = GDP + phosphate + H(+). Its function is as follows. GTP hydrolase that promotes the GTP-dependent binding of aminoacyl-tRNA to the A-site of ribosomes during protein biosynthesis. The chain is Elongation factor Tu 1 from Ruthia magnifica subsp. Calyptogena magnifica.